Here is a 380-residue protein sequence, read N- to C-terminus: Queuine tRNA-ribosyltransferase (380 aa).

D96 (proton acceptor) is an active-site residue. Residues 96–100 (DSGGF), D150, Q193, and G220 each bind substrate. The RNA binding stretch occupies residues 251 to 257 (GVGAPDS). D270 functions as the Nucleophile in the catalytic mechanism. Residues 275–279 (TRIAR) are RNA binding; important for wobble base 34 recognition. C308, C310, C313, and H339 together coordinate Zn(2+).

Belongs to the queuine tRNA-ribosyltransferase family. Homodimer. Within each dimer, one monomer is responsible for RNA recognition and catalysis, while the other monomer binds to the replacement base PreQ1. It depends on Zn(2+) as a cofactor.

It carries out the reaction 7-aminomethyl-7-carbaguanine + guanosine(34) in tRNA = 7-aminomethyl-7-carbaguanosine(34) in tRNA + guanine. Its pathway is tRNA modification; tRNA-queuosine biosynthesis. In terms of biological role, catalyzes the base-exchange of a guanine (G) residue with the queuine precursor 7-aminomethyl-7-deazaguanine (PreQ1) at position 34 (anticodon wobble position) in tRNAs with GU(N) anticodons (tRNA-Asp, -Asn, -His and -Tyr). Catalysis occurs through a double-displacement mechanism. The nucleophile active site attacks the C1' of nucleotide 34 to detach the guanine base from the RNA, forming a covalent enzyme-RNA intermediate. The proton acceptor active site deprotonates the incoming PreQ1, allowing a nucleophilic attack on the C1' of the ribose to form the product. After dissociation, two additional enzymatic reactions on the tRNA convert PreQ1 to queuine (Q), resulting in the hypermodified nucleoside queuosine (7-(((4,5-cis-dihydroxy-2-cyclopenten-1-yl)amino)methyl)-7-deazaguanosine). The protein is Queuine tRNA-ribosyltransferase of Streptococcus pneumoniae (strain ATCC BAA-255 / R6).